The sequence spans 245 residues: Eukaryotic translation initiation factor 6 (245 aa).

The protein belongs to the eIF-6 family. In terms of assembly, monomer. Associates with the 60S ribosomal subunit.

The protein resides in the cytoplasm. The protein localises to the nucleus. It localises to the nucleolus. Its function is as follows. Binds to the 60S ribosomal subunit and prevents its association with the 40S ribosomal subunit to form the 80S initiation complex in the cytoplasm. May also be involved in ribosome biogenesis. The chain is Eukaryotic translation initiation factor 6 from Drosophila melanogaster (Fruit fly).